A 450-amino-acid polypeptide reads, in one-letter code: Sulfite exporter TauE/SafE family protein 1 (450 aa).

The next 12 helical transmembrane spans lie at 5–25, 48–68, 70–90, 97–117, 130–150, 153–173, 223–243, 261–281, 316–336, 340–360, 378–398, and 408–428; these read LVPL…SALA, TIEV…AASI, SAGG…IAGL, SFSA…NLFL, FDLA…GVIC, MFPN…STMK, FPWM…SINL, ALYW…TLCI, VMAL…GMLI, LLQI…MVLF, GTAA…LMVV, and ASII…LMTT.

This sequence belongs to the 4-toluene sulfonate uptake permease (TSUP) (TC 2.A.102) family.

The protein localises to the membrane. The chain is Sulfite exporter TauE/SafE family protein 1 from Arabidopsis thaliana (Mouse-ear cress).